A 2313-amino-acid polypeptide reads, in one-letter code: Protein Ycf2 (2313 aa).

G1606–S1613 lines the ATP pocket.

This sequence belongs to the Ycf2 family.

It is found in the plastid. It localises to the chloroplast stroma. Probable ATPase of unknown function. Its presence in a non-photosynthetic plant (Epifagus virginiana) and experiments in tobacco indicate that it has an essential function which is probably not related to photosynthesis. The protein is Protein Ycf2 of Psilotum nudum (Whisk fern).